Here is a 339-residue protein sequence, read N- to C-terminus: Alcohol dehydrogenase notN (339 aa).

Residues cysteine 44, histidine 65, glutamate 66, cysteine 99, cysteine 102, cysteine 110, and cysteine 152 each coordinate Zn(2+). Histidine 65 serves as a coordination point for an alcohol. NAD(+) is bound by residues glycine 176–glycine 181, valine 196–glycine 201, lysine 204, leucine 263–phenylalanine 265, proline 287–glycine 289, and glutamate 295–alanine 297.

This sequence belongs to the zinc-containing alcohol dehydrogenase family. It depends on Zn(2+) as a cofactor.

The catalysed reaction is a primary alcohol + NAD(+) = an aldehyde + NADH + H(+). The enzyme catalyses a secondary alcohol + NAD(+) = a ketone + NADH + H(+). Alcohol dehydrogenase; part of the gene cluster that mediates the biosynthesis of notoamide, a fungal indole alkaloid that belongs to a family of natural products containing a characteristic bicyclo[2.2.2]diazaoctane core. The first step of notoamide biosynthesis involves coupling of L-proline and L-tryptophan by the bimodular NRPS notE, to produce cyclo-L-tryptophan-L-proline called brevianamide F. The reverse prenyltransferase notF then acts as a deoxybrevianamide E synthase and converts brevianamide F to deoxybrevianamide E via reverse prenylation at C-2 of the indole ring leading to the bicyclo[2.2.2]diazaoctane core. Deoxybrevianamide E is further hydroxylated at C-6 of the indole ring, likely catalyzed by the cytochrome P450 monooxygenase notG, to yield 6-hydroxy-deoxybrevianamide E. 6-hydroxy-deoxybrevianamide E is a specific substrate of the prenyltransferase notC for normal prenylation at C-7 to produce 6-hydroxy-7-prenyl-deoxybrevianamide, also called notoamide S. As the proposed pivotal branching point in notoamide biosynthesis, notoamide S can be diverted to notoamide E through an oxidative pyran ring closure putatively catalyzed by either notH cytochrome P450 monooxygenase or the notD FAD-linked oxidoreductase. This step would be followed by an indole 2,3-epoxidation-initiated pinacol-like rearrangement catalyzed by the notB FAD-dependent monooxygenase leading to the formation of notoamide C and notoamide D. On the other hand notoamide S is converted to notoamide T by notH (or notD), a bifunctional oxidase that also functions as the intramolecular Diels-Alderase responsible for generation of (+)-notoamide T. To generate antipodal (-)-notoaminide T, notH' (or notD') in Aspergillus versicolor is expected to catalyze a Diels-Alder reaction leading to the opposite stereochemistry. The remaining oxidoreductase notD (or notH) likely catalyzes the oxidative pyran ring formation to yield (+)-stephacidin A. The FAD-dependent monooxygenase notI is highly similar to notB and is predicted to catalyze a similar conversion from (+)-stephacidin A to (-)-notoamide B via the 2,3-epoxidation of (+)-stephacidin A followed by a pinacol-type rearrangement. Finally, it remains unclear which enzyme could be responsible for the final hydroxylation steps leading to notoamide A and sclerotiamide. The function of notN in the notoamide biosynthesis has not been determined yet. The protein is Alcohol dehydrogenase notN of Aspergillus sp. (strain MF297-2).